The sequence spans 540 residues: Chaperonin GroEL (540 aa).

ATP contacts are provided by residues 29-32, 86-90, G413, and D493; these read TLGP and DGTTT. The segment at 520–540 is disordered; it reads AEKPEPKPAPGPADPGAGMDF.

This sequence belongs to the chaperonin (HSP60) family. As to quaternary structure, forms a cylinder of 14 subunits composed of two heptameric rings stacked back-to-back. Interacts with the co-chaperonin GroES.

It is found in the cytoplasm. The catalysed reaction is ATP + H2O + a folded polypeptide = ADP + phosphate + an unfolded polypeptide.. Together with its co-chaperonin GroES, plays an essential role in assisting protein folding. The GroEL-GroES system forms a nano-cage that allows encapsulation of the non-native substrate proteins and provides a physical environment optimized to promote and accelerate protein folding. The chain is Chaperonin GroEL from Tropheryma whipplei (strain TW08/27) (Whipple's bacillus).